The following is a 324-amino-acid chain: PTS system glucose-specific EIICBA component (324 aa).

Residues H1–E63 enclose the PTS EIIC type-1 domain. Transmembrane regions (helical) follow at residues V5 to P25 and T28 to F48. The PTS EIIB type-1 domain maps to G78–A159. Catalysis depends on C100, which acts as the Phosphocysteine intermediate; for EIIB activity. Residues K156 to T177 are disordered. A compositionally biased stretch (low complexity) spans T167–T177. Residues D194–N298 form the PTS EIIA type-1 domain. The active-site Tele-phosphohistidine intermediate; for EIIA activity is the H246.

It is found in the cell membrane. It carries out the reaction N(pros)-phospho-L-histidyl-[protein] + D-glucose(out) = D-glucose 6-phosphate(in) + L-histidyl-[protein]. Its function is as follows. The phosphoenolpyruvate-dependent sugar phosphotransferase system (sugar PTS), a major carbohydrate active transport system, catalyzes the phosphorylation of incoming sugar substrates concomitantly with their translocation across the cell membrane. This system is involved in glucose transport. The protein is PTS system glucose-specific EIICBA component (ptsG) of Geobacillus stearothermophilus (Bacillus stearothermophilus).